A 228-amino-acid polypeptide reads, in one-letter code: Triosephosphate isomerase (228 aa).

Residue 11–13 (NFK) participates in substrate binding. Catalysis depends on His-95, which acts as the Electrophile. Glu-143 functions as the Proton acceptor in the catalytic mechanism. Residues Ile-148, Gly-183, and 204–205 (AS) contribute to the substrate site.

Belongs to the triosephosphate isomerase family. Homotetramer; dimer of dimers.

It localises to the cytoplasm. It carries out the reaction D-glyceraldehyde 3-phosphate = dihydroxyacetone phosphate. Its pathway is carbohydrate biosynthesis; gluconeogenesis. The protein operates within carbohydrate degradation; glycolysis; D-glyceraldehyde 3-phosphate from glycerone phosphate: step 1/1. Its function is as follows. Involved in the gluconeogenesis. Catalyzes stereospecifically the conversion of dihydroxyacetone phosphate (DHAP) to D-glyceraldehyde-3-phosphate (G3P). This chain is Triosephosphate isomerase, found in Pyrococcus horikoshii (strain ATCC 700860 / DSM 12428 / JCM 9974 / NBRC 100139 / OT-3).